A 278-amino-acid chain; its full sequence is MSLVCRKFNGYNDRPWLVWLHGLLGCGDEWLPLVNLCAQHPSLVIDLPGHGDSTDVRVKDLLEMSCLLSETLAEQRISQYWLIGYSLGGRIAMHHACYGDIRGLCGLLIEGGNPGLFSQQERNNRLEHDRNWAGRFRSQPIEQVLSDWYQQPVFSDLLPEQRQQLIKVRRHNNGDGVANMLENTSLGHQPWLVPVLQQLTLPFVYLCGENDKKFQHLAKRCALPLQTIPRVGHNAHRANAVAFAAVVNHFLSLFNKEYEYDLPERRRTLFPNCMAGLL.

This sequence belongs to the AB hydrolase superfamily. MenH family. Monomer.

It carries out the reaction 5-enolpyruvoyl-6-hydroxy-2-succinyl-cyclohex-3-ene-1-carboxylate = (1R,6R)-6-hydroxy-2-succinyl-cyclohexa-2,4-diene-1-carboxylate + pyruvate. It participates in quinol/quinone metabolism; 1,4-dihydroxy-2-naphthoate biosynthesis; 1,4-dihydroxy-2-naphthoate from chorismate: step 3/7. The protein operates within quinol/quinone metabolism; menaquinone biosynthesis. In terms of biological role, catalyzes a proton abstraction reaction that results in 2,5-elimination of pyruvate from 2-succinyl-5-enolpyruvyl-6-hydroxy-3-cyclohexene-1-carboxylate (SEPHCHC) and the formation of 2-succinyl-6-hydroxy-2,4-cyclohexadiene-1-carboxylate (SHCHC). The protein is 2-succinyl-6-hydroxy-2,4-cyclohexadiene-1-carboxylate synthase of Photorhabdus laumondii subsp. laumondii (strain DSM 15139 / CIP 105565 / TT01) (Photorhabdus luminescens subsp. laumondii).